A 273-amino-acid polypeptide reads, in one-letter code: Ribosomal RNA small subunit methyltransferase I (273 aa).

It belongs to the methyltransferase superfamily. RsmI family.

Its subcellular location is the cytoplasm. The enzyme catalyses cytidine(1402) in 16S rRNA + S-adenosyl-L-methionine = 2'-O-methylcytidine(1402) in 16S rRNA + S-adenosyl-L-homocysteine + H(+). In terms of biological role, catalyzes the 2'-O-methylation of the ribose of cytidine 1402 (C1402) in 16S rRNA. The protein is Ribosomal RNA small subunit methyltransferase I of Xylella fastidiosa (strain Temecula1 / ATCC 700964).